Here is a 476-residue protein sequence, read N- to C-terminus: Major facilitator superfamily domain-containing protein 12 (476 aa).

Residue Met-1 is modified to N-acetylmethionine. At 1-25 (MSPPSDDAGPGPPRTLSLAARLSFA) the chain is on the cytoplasmic side. Residues 26–46 (VGHFLNDLCAGMWFTYLLLFL) traverse the membrane as a helical segment. At 47–55 (HSVRGYSSR) the chain is on the lumenal side. A helical transmembrane segment spans residues 56-76 (GAGLLLLLGQVADGLCTPLVG). The Cytoplasmic segment spans residues 77-94 (YEADRASCVRCGPRKAWH). A helical transmembrane segment spans residues 95–115 (LAGTVCVLLSFPFIFSPCLGC). Over 116-121 (GEATPE) the chain is Lumenal. The helical transmembrane segment at 122 to 142 (WAALLYYGPFIVVFQFGWAAT) threads the bilayer. Residues 143-167 (QIAHLSLIPELVTSDHEKVELTALR) lie on the Cytoplasmic side of the membrane. Residues 168–188 (YAFTVVANITVYGAAWLLLHL) traverse the membrane as a helical segment. The Lumenal segment spans residues 189–213 (QGSAHGEQDISVGDQLGVQDVPVFR). The helical transmembrane segment at 214–234 (NLALLVVGVGAIFSLLFHLGT) threads the bilayer. The Cytoplasmic portion of the chain corresponds to 235-284 (KEGHRSQHWGNEPNEHTPLVAPAAQPLLLWKHWLREPAFYQVGMLYMTTR). Phosphothreonine is present on Thr-251. A helical membrane pass occupies residues 285–305 (LIVNLSQTYIAMYLTYSLSLP). Residue Lys-306 is a topological domain, lumenal. The helical transmembrane segment at 307–327 (KFIATIPLVMYLSGFFSSFLM) threads the bilayer. The Cytoplasmic portion of the chain corresponds to 328-343 (KPVNRRIGRNMTYFTG). Helical transmembrane passes span 344–364 (LLVI…GVAV) and 365–385 (YGAA…SLAM). Residues 386-398 (TADLIGPHTHSGA) lie on the Cytoplasmic side of the membrane. A helical membrane pass occupies residues 399-419 (FVYGAMSFSDKVANGLAVMAV). Topologically, residues 420 to 444 (QSLHPCPSELCCGACISFYHWVMTA) are lumenal. The chain crosses the membrane as a helical span at residues 445–465 (VTGGVGVAAALALCSLLIWPI). Topologically, residues 466–476 (RIRNRDPRDRP) are cytoplasmic.

Belongs to the major facilitator superfamily. Phosphorylation at Thr-251 by MTOR via mTORC1 pathway promotes cysteine transport in lysosomes, thereby regulating lysosomal cysteine and cystine storage and redox homeostasis.

It localises to the melanosome membrane. The protein localises to the lysosome membrane. The enzyme catalyses L-cysteine(in) = L-cysteine(out). Its function is as follows. Transporter that mediates the import of cysteine into melanosomes, thereby regulating skin/hair pigmentation. In melanosomes, cysteine import is required both for normal levels of cystine, the oxidized dimer of cysteine, and provide cysteine for the production of the cysteinyldopas used in pheomelanin synthesis, thereby regulating skin/hair pigmentation. Also catalyzes import of cysteine into lysosomes in non-pigmented cells, regulating lysosomal cystine and cysteine storage, which is essnetial for redox homeostasis. The protein is Major facilitator superfamily domain-containing protein 12 of Mus musculus (Mouse).